Reading from the N-terminus, the 200-residue chain is Superoxide dismutase [Mn] 1 (200 aa).

Positions 29, 76, 158, and 162 each coordinate Mn(2+).

It belongs to the iron/manganese superoxide dismutase family. It depends on Mn(2+) as a cofactor.

The enzyme catalyses 2 superoxide + 2 H(+) = H2O2 + O2. Functionally, destroys superoxide anion radicals which are normally produced within the cells and which are toxic to biological systems. In Haloferax volcanii (strain ATCC 29605 / DSM 3757 / JCM 8879 / NBRC 14742 / NCIMB 2012 / VKM B-1768 / DS2) (Halobacterium volcanii), this protein is Superoxide dismutase [Mn] 1 (sod1).